Reading from the N-terminus, the 487-residue chain is N-succinylglutamate 5-semialdehyde dehydrogenase (487 aa).

NAD(+) is bound at residue 221–226 (GSSDTG). Catalysis depends on residues Glu244 and Cys278.

The protein belongs to the aldehyde dehydrogenase family. AstD subfamily.

It catalyses the reaction N-succinyl-L-glutamate 5-semialdehyde + NAD(+) + H2O = N-succinyl-L-glutamate + NADH + 2 H(+). Its pathway is amino-acid degradation; L-arginine degradation via AST pathway; L-glutamate and succinate from L-arginine: step 4/5. Catalyzes the NAD-dependent reduction of succinylglutamate semialdehyde into succinylglutamate. The chain is N-succinylglutamate 5-semialdehyde dehydrogenase from Paraburkholderia xenovorans (strain LB400).